Consider the following 498-residue polypeptide: POU domain protein 2, isoform A (498 aa).

A compositionally biased stretch (low complexity) spans 1–30 (MMVLQQQQQQRLWDATTTSNTNTQTQQSAN). The tract at residues 1 to 35 (MMVLQQQQQQRLWDATTTSNTNTQTQQSANVESTP) is disordered. 5 positions are modified to phosphoserine: serine 72, serine 211, serine 215, serine 217, and serine 219. Residues 191-273 (QMKQQQREDP…STPKPTSGLT (83 aa)) are disordered. Low complexity predominate over residues 207 to 222 (PLAKSPLRSPSLSPVP). The span at 228 to 251 (QQRTPPNSMTANSLGMSSAVMTPN) shows a compositional bias: polar residues. Residues 252–270 (TPSMQQQPQLQQSTPKPTS) are compositionally biased toward low complexity. A POU-specific domain is found at 286–360 (EETTDLEELE…LLQKWLEDAD (75 aa)). Residues 391–450 (RRKKRTSIETTVRTTLEKAFLMNCKPTSEEISQLSERLNMDKEVIRVWFCNRRQKEKRIN) constitute a DNA-binding region (homeobox).

The protein belongs to the POU transcription factor family. Class-2 subfamily. Initial expression in cellular blastoderm stage, then in ectodermal stripes during germband extension. Broad expression in the neuroectoderm followed by limitation to discrete subsets of CNS cells, and expression in specific PNS neurons and support cells.

Its subcellular location is the nucleus. Its function is as follows. DNA-binding regulatory protein implicated in early development. Involved in neuronal cell fate decision. May act as an octamer-dependent activator of transcription. Could also play an early role in specific ectodermal cells, and a subsequent role in the embryonic nervous system. This Drosophila melanogaster (Fruit fly) protein is POU domain protein 2, isoform A (pdm2).